The chain runs to 212 residues: ER lumen protein-retaining receptor 2 (212 aa).

Over methionine 1–phenylalanine 4 the chain is Lumenal. Residues arginine 5–tryptophan 24 traverse the membrane as a helical segment. Residues asparagine 25 to isoleucine 32 are Cytoplasmic-facing. The helical transmembrane segment at serine 33–phenylalanine 52 threads the bilayer. Residues arginine 47–tyrosine 48 form an interaction with the K-D-E-L motif on target proteins region. The Lumenal segment spans residues threonine 53–leucine 58. A helical transmembrane segment spans residues tyrosine 59 to tyrosine 79. At methionine 80–threonine 92 the chain is on the cytoplasmic side. Residues phenylalanine 93–asparagine 110 form a helical membrane-spanning segment. Over histidine 111–leucine 116 the chain is Lumenal. Residues glutamate 117 to leucine 135 form a helical membrane-spanning segment. Residues phenylalanine 136–threonine 149 are Cytoplasmic-facing. The helical transmembrane segment at histidine 150–tryptophan 168 threads the bilayer. The interval arginine 159–arginine 169 is interaction with the K-D-E-L motif on target proteins. Residues arginine 169–leucine 178 are Lumenal-facing. Residues isoleucine 179–valine 199 traverse the membrane as a helical segment. Over threonine 200–alanine 212 the chain is Cytoplasmic. Positions lysine 204–lysine 207 are important for recycling of cargo proteins with the sequence motif K-D-E-L from the Golgi to the endoplasmic reticulum.

This sequence belongs to the ERD2 family.

Its subcellular location is the endoplasmic reticulum membrane. It localises to the golgi apparatus membrane. The protein resides in the cytoplasmic vesicle. It is found in the COPI-coated vesicle membrane. In terms of biological role, receptor for the C-terminal sequence motif K-D-E-L that is present on endoplasmic reticulum resident proteins and that mediates their recycling from the Golgi back to the endoplasmic reticulum. Binding is pH dependent, and is optimal at pH 5-5.4. The chain is ER lumen protein-retaining receptor 2 (kdelr2) from Xenopus laevis (African clawed frog).